A 205-amino-acid polypeptide reads, in one-letter code: Cytochrome c oxidase subunit 3 (205 aa).

The next 5 membrane-spanning stretches (helical) occupy residues 28-48, 72-92, 104-124, 142-162, and 184-204; these read GTIVFLSQELMFFAGLFAMYF, ALVITIILISSSVTAQFGVFA, WFSLTILLGAIFLVGQAYEYF, FFITTGFHAAHVLAGALAFVV, and SYYWHFVDVVWIGLFITIYFI.

The protein belongs to the cytochrome c oxidase subunit 3 family. In terms of assembly, associates with subunits I, II and IV to form cytochrome c oxidase.

It is found in the cell membrane. The catalysed reaction is 4 Fe(II)-[cytochrome c] + O2 + 8 H(+)(in) = 4 Fe(III)-[cytochrome c] + 2 H2O + 4 H(+)(out). The chain is Cytochrome c oxidase subunit 3 (ctaE) from Corynebacterium diphtheriae (strain ATCC 700971 / NCTC 13129 / Biotype gravis).